Here is a 284-residue protein sequence, read N- to C-terminus: Tropomyosin (284 aa).

Positions 1–284 (MDAIKKKMQA…DMTFTELIGN (284 aa)) form a coiled coil.

Belongs to the tropomyosin family. As to quaternary structure, homodimer.

Tropomyosin, in association with the troponin complex, plays a central role in the calcium dependent regulation of muscle contraction. The polypeptide is Tropomyosin (Periplaneta fuliginosa (Smokybrown cockroach)).